Here is a 256-residue protein sequence, read N- to C-terminus: Kallikrein 1-related peptidase-like b4 (256 aa).

The N-terminal stretch at 1 to 17 (MWFLILFLALSLGGIDA) is a signal peptide. The tract at residues 18-24 (APPVQSQ) is activation peptide homolog. One can recognise a Peptidase S1 domain in the interval 18–253 (APPVQSQVDC…FSSWIRETMA (236 aa)). The cysteines at positions 45 and 61 are disulfide-linked. Zn(2+) contacts are provided by Glu77 and His84. Intrachain disulfides connect Cys147/Cys214, Cys179/Cys193, and Cys204/Cys229.

The protein belongs to the peptidase S1 family. Kallikrein subfamily. 7S nerve growth factor is composed of two alpha chains, a beta dimer composed of identical chains, and two gamma chains. It depends on Zn(2+) as a cofactor. Post-translationally, the presence of Gln-24 prevents cleavage of the activation peptide, which remains attached at the amino end of the mature alpha chain.

The chain is Kallikrein 1-related peptidase-like b4 (Klk1b4) from Mus musculus (Mouse).